Reading from the N-terminus, the 292-residue chain is Nucleotide-binding protein AZOSEA20610 (292 aa).

8–15 (GLSGSGKS) is an ATP binding site. 57 to 60 (DVRS) serves as a coordination point for GTP.

It belongs to the RapZ-like family.

Displays ATPase and GTPase activities. The polypeptide is Nucleotide-binding protein AZOSEA20610 (Aromatoleum aromaticum (strain DSM 19018 / LMG 30748 / EbN1) (Azoarcus sp. (strain EbN1))).